A 438-amino-acid polypeptide reads, in one-letter code: Chromosomal replication initiator protein DnaA (438 aa).

A domain I, interacts with DnaA modulators region spans residues 1–71; the sequence is MTTKEFLTII…CFEIYDGSKP (71 aa). Positions 71–100 are domain II; the sequence is PTIEIKLSNEKKSKKEILKEQTQNESTEST. Positions 101 to 315 are domain III, AAA+ region; it reads ILNPSYTFDS…GVLIRINASA (215 aa). ATP is bound by residues Gly-145, Gly-147, Lys-148, and Thr-149. The domain IV, binds dsDNA stretch occupies residues 316 to 438; sequence SLLNQEITLP…LKNKIINSRE (123 aa).

The protein belongs to the DnaA family. In terms of assembly, oligomerizes as a right-handed, spiral filament on DNA at oriC.

Its subcellular location is the cytoplasm. Its function is as follows. Plays an essential role in the initiation and regulation of chromosomal replication. ATP-DnaA binds to the origin of replication (oriC) to initiate formation of the DNA replication initiation complex once per cell cycle. Binds the DnaA box (a 9 base pair repeat at the origin) and separates the double-stranded (ds)DNA. Forms a right-handed helical filament on oriC DNA; dsDNA binds to the exterior of the filament while single-stranded (ss)DNA is stabiized in the filament's interior. The ATP-DnaA-oriC complex binds and stabilizes one strand of the AT-rich DNA unwinding element (DUE), permitting loading of DNA polymerase. After initiation quickly degrades to an ADP-DnaA complex that is not apt for DNA replication. Binds acidic phospholipids. The sequence is that of Chromosomal replication initiator protein DnaA from Aliarcobacter butzleri (strain RM4018) (Arcobacter butzleri).